Reading from the N-terminus, the 386-residue chain is Lysophosphatidylserine lipase ABHD12 (386 aa).

Residues 1-66 lie on the Cytoplasmic side of the membrane; sequence MRKRAEPVPP…YGLWSRLRMF (66 aa). A helical transmembrane segment spans residues 67 to 87; that stretch reads LIFLLGLYIAIPFLVKICPAI. The Extracellular segment spans residues 88–386; that stretch reads QTQLVFLNLV…RDFLGNTEQQ (299 aa). Residue N114 is glycosylated (N-linked (GlcNAc...) asparagine). S237 functions as the Nucleophile in the catalytic mechanism. Residues D324 and H363 each act as charge relay system in the active site.

This sequence belongs to the serine esterase family.

The protein localises to the endoplasmic reticulum membrane. The enzyme catalyses 1-(9Z-octadecenoyl)-sn-glycero-3-phospho-L-serine + H2O = sn-glycero-3-phospho-L-serine + (9Z)-octadecenoate + H(+). The catalysed reaction is 1-(9Z-octadecenoyl)-sn-glycero-3-phospho-(1'-sn-glycerol) + H2O = sn-glycero-3-phospho-(1'-sn-glycerol) + (9Z)-octadecenoate + H(+). It catalyses the reaction 1-(9Z-octadecenoyl)-sn-glycero-3-phospho-(1D-myo-inositol) + H2O = sn-glycero-3-phospho-1D-myo-inositol + (9Z)-octadecenoate + H(+). It carries out the reaction 1-(9Z-octadecenoyl)-sn-glycero-3-phosphoethanolamine + H2O = sn-glycero-3-phosphoethanolamine + (9Z)-octadecenoate + H(+). The enzyme catalyses 1-(9Z-octadecenoyl)-sn-glycero-3-phosphocholine + H2O = 1-(9Z-octadecenoyl)-sn-glycerol + phosphocholine + H(+). The catalysed reaction is 2-(9Z-octadecenoyl)-glycerol + H2O = glycerol + (9Z)-octadecenoate + H(+). It catalyses the reaction 1-hexadecanoyl-sn-glycero-3-phospho-L-serine + H2O = sn-glycero-3-phospho-L-serine + hexadecanoate + H(+). It carries out the reaction 2-(5Z,8Z,11Z,14Z-eicosatetraenoyl)-glycerol + H2O = glycerol + (5Z,8Z,11Z,14Z)-eicosatetraenoate + H(+). The enzyme catalyses Hydrolyzes glycerol monoesters of long-chain fatty acids.. The catalysed reaction is 1-decanoylglycerol + H2O = decanoate + glycerol + H(+). It catalyses the reaction 1-dodecanoylglycerol + H2O = dodecanoate + glycerol + H(+). It carries out the reaction 1-tetradecanoylglycerol + H2O = tetradecanoate + glycerol + H(+). The enzyme catalyses 2-hexadecanoylglycerol + H2O = glycerol + hexadecanoate + H(+). The catalysed reaction is 1-(9Z-octadecenoyl)-glycerol + H2O = glycerol + (9Z)-octadecenoate + H(+). It catalyses the reaction 2-(9Z,12Z-octadecadienoyl)-glycerol + H2O = (9Z,12Z)-octadecadienoate + glycerol + H(+). It carries out the reaction 1-(5Z,8Z,11Z,14Z-eicosatetraenoyl)-glycerol + H2O = glycerol + (5Z,8Z,11Z,14Z)-eicosatetraenoate + H(+). The enzyme catalyses 1-(9Z,12Z-octadecadienoyl)-glycerol + H2O = (9Z,12Z)-octadecadienoate + glycerol + H(+). The catalysed reaction is 1-hexadecanoylglycerol + H2O = glycerol + hexadecanoate + H(+). It catalyses the reaction 1-octadecanoylglycerol + H2O = octadecanoate + glycerol + H(+). It carries out the reaction 1-octadecanoyl-2-(9,10-epoxyoctadecanoyl)-sn-glycero-3-phospho-L-serine + H2O = 9,10-epoxyoctadecanoate + 1-octadecanoyl-sn-glycero-3-phosphoserine + H(+). The enzyme catalyses 1-octadecanoyl-2-(10-hydroxyoctadecanoyl)-sn-glycero-3-phospho-L-serine + H2O = 1-octadecanoyl-sn-glycero-3-phosphoserine + 10-hydroxyoctadecanoate + H(+). The catalysed reaction is 1-hexadecanoyl-2-(10-hydroxyoctadecanoyl)-sn-glycero-3-phospho-L-serine + H2O = 10-hydroxyoctadecanoate + 1-hexadecanoyl-sn-glycero-3-phospho-L-serine + H(+). Its function is as follows. Lysophosphatidylserine (LPS) lipase that mediates the hydrolysis of lysophosphatidylserine, a class of signaling lipids that regulates immunological and neurological processes. Represents a major lysophosphatidylserine lipase in the brain, thereby playing a key role in the central nervous system. Also able to hydrolyze oxidized phosphatidylserine; oxidized phosphatidylserine is produced in response to severe inflammatory stress and constitutes a proapoptotic 'eat me' signal. Also has monoacylglycerol (MAG) lipase activity: hydrolyzes 2-arachidonoylglycerol (2-AG), thereby acting as a regulator of endocannabinoid signaling pathways. Has a strong preference for very-long-chain lipid substrates; substrate specificity is likely due to improved catalysis and not improved substrate binding. The polypeptide is Lysophosphatidylserine lipase ABHD12 (Xenopus tropicalis (Western clawed frog)).